Here is a 278-residue protein sequence, read N- to C-terminus: ABC transporter I family member 11, chloroplastic (278 aa).

The N-terminal 49 residues, 1 to 49, are a transit peptide targeting the chloroplast; that stretch reads MAVSTFSSPTPVFGIAEPPASFSSTAIGWKQPLRFRRTKKPRVISCDYS. Residues 51–278 form the ABC transporter domain; sequence IEVRDVCYRP…GVLVAERPPL (228 aa). ATP is bound at residue 85 to 92; the sequence is GKSGSGKT.

Belongs to the ABC transporter superfamily. ABCI family.

The protein resides in the plastid. It localises to the chloroplast. The sequence is that of ABC transporter I family member 11, chloroplastic (ABCI11) from Arabidopsis thaliana (Mouse-ear cress).